The chain runs to 508 residues: Polyamine oxidase FMS1 (508 aa).

The protein belongs to the flavin monoamine oxidase family. The cofactor is FAD.

The catalysed reaction is spermine + O2 + H2O = 3-aminopropanal + spermidine + H2O2. The enzyme catalyses spermidine + O2 + H2O = 3-aminopropanal + putrescine + H2O2. It carries out the reaction N(1)-acetylspermine + O2 + H2O = 3-acetamidopropanal + spermidine + H2O2. It catalyses the reaction N(1)-acetylspermidine + O2 + H2O = 3-acetamidopropanal + putrescine + H2O2. The catalysed reaction is N(8)-acetylspermidine + O2 + H2O = 4-acetamidobutanal + propane-1,3-diamine + H2O2. In terms of biological role, involved in the production of beta-alanine, a precursor of pantothenic acid. Multicopy suppressor of fenpropimorph resistance. The protein is Polyamine oxidase FMS1 (FMS1) of Saccharomyces cerevisiae (strain ATCC 204508 / S288c) (Baker's yeast).